The sequence spans 200 residues: Troponin I-like protein (200 aa).

2 disordered regions span residues 1-20 (MGDE…AEVR) and 181-200 (ENKA…ENEE). The stretch at 2-116 (GDEEKRKMEE…EDAKYDLEYE (115 aa)) forms a coiled coil.

Belongs to the troponin I family. In terms of tissue distribution, expressed in salivary gland, gut, muscle and cuticle (at protein level).

Its function is as follows. Inhibits endothelial cell proliferation and angiogenesis in a vertebrate host. Probably required for efficient blood feeding on vertebrate hosts. This is Troponin I-like protein from Haemaphysalis longicornis (Bush tick).